Reading from the N-terminus, the 881-residue chain is Disks large homolog 2 (881 aa).

2 disordered regions span residues 16–41 and 63–88; these read HRQQNRPPAVQGSQHQSHSPACMNPA and LSTTDSPHSYRYQDDDSPPPEHSFPR. PDZ domains are found at residues 155–242, 250–337, and 424–505; these read EITL…RRRR, EIKL…GKPT, and KIVL…QYRP. One can recognise an SH3 domain in the interval 539 to 609; it reads KRSLYVRALF…PSKRRVERKE (71 aa). Residues 683 to 866 enclose the Guanylate kinase-like domain; the sequence is ARPVIILGPM…IYNQCKMVIE (184 aa). The interval 709–729 is disordered; it reads GSCVPPANSSDQEDTTRPKRD.

The protein belongs to the MAGUK family.

Its subcellular location is the cell membrane. It localises to the postsynaptic density. It is found in the synapse. The protein localises to the membrane. The protein resides in the cell projection. Its subcellular location is the axon. It localises to the perikaryon. In terms of biological role, may play a role in synapse assembly and function. This is Disks large homolog 2 (dlg2) from Danio rerio (Zebrafish).